The chain runs to 922 residues: Chaperone protein ClpC, chloroplastic (922 aa).

The transit peptide at 1 to 72 directs the protein to the chloroplast; it reads MARVLAQSLS…RPGLDFHSKV (72 aa). The Clp R domain occupies 92-234; sequence FERFTEKAIK…RTQVIRMVGE (143 aa). Repeat regions lie at residues 95 to 160 and 170 to 234; these read FTEK…IGRG and FTPR…MVGE. An i region spans residues 255 to 502; sequence LEEYGTNLTK…RVRLQHAQLP (248 aa). Residue 300-307 coordinates ATP; sequence GEPGVGKT. A UVR domain is found at 509 to 544; sequence DKEVRKIVKEKEEYVRNQDFEKAGELRDKEMDLKAQ. The tract at residues 569–760 is II; the sequence is VTEVDIQHIV…LLIMTSNVGS (192 aa). 643-650 lines the ATP pocket; the sequence is GPTGVGKS.

The protein belongs to the ClpA/ClpB family. ClpC subfamily.

Its subcellular location is the plastid. It is found in the chloroplast. Its function is as follows. Molecular chaperone that may interact with a ClpP-like protease involved in degradation of denatured proteins in the chloroplast. The sequence is that of Chaperone protein ClpC, chloroplastic from Pisum sativum (Garden pea).